Reading from the N-terminus, the 211-residue chain is CASP-like protein 3A1 (211 aa).

Over 1–45 (MGSIGNGRSDSVVGIQMPPAGSKMVLEPEALQVTTSPVPRWPRLG) the chain is Cytoplasmic. The chain crosses the membrane as a helical span at residues 46-66 (VVMVATRAVAMVMALLSMSLM). At 67–95 (VSSKQRGILTIFGIEIPLDANWSFSYSLQ) the chain is on the extracellular side. Asn-87 is a glycosylation site (N-linked (GlcNAc...) asparagine). The chain crosses the membrane as a helical span at residues 96 to 116 (FLVAMSTASAAYSLAQLLLIA). At 117 to 131 (HKAVKKSPIVPSRRH) the chain is on the cytoplasmic side. A helical transmembrane segment spans residues 132-152 (AWLLFAGDQVFSLAMMSAGSA). Over 153 to 186 (AAAVANLNRTGIRHTALPNFCKPLPRFCDLSAVS) the chain is Extracellular. An N-linked (GlcNAc...) asparagine glycan is attached at Asn-160. The chain crosses the membrane as a helical span at residues 187–207 (IACAFLSCVFLAASAVIDVIW). Topologically, residues 208-211 (LSSP) are cytoplasmic.

This sequence belongs to the Casparian strip membrane proteins (CASP) family. As to quaternary structure, homodimer and heterodimers.

The protein resides in the cell membrane. In Sorghum bicolor (Sorghum), this protein is CASP-like protein 3A1.